Consider the following 544-residue polypeptide: Chaperonin GroEL (544 aa).

Residues 30–33 (TLGP), lysine 51, 87–91 (DGTTT), glycine 415, 481–483 (DAL), and aspartate 497 each bind ATP.

This sequence belongs to the chaperonin (HSP60) family. Forms a cylinder of 14 subunits composed of two heptameric rings stacked back-to-back. Interacts with the co-chaperonin GroES.

Its subcellular location is the cytoplasm. It catalyses the reaction ATP + H2O + a folded polypeptide = ADP + phosphate + an unfolded polypeptide.. Functionally, together with its co-chaperonin GroES, plays an essential role in assisting protein folding. The GroEL-GroES system forms a nano-cage that allows encapsulation of the non-native substrate proteins and provides a physical environment optimized to promote and accelerate protein folding. This Chlamydia trachomatis serovar A (strain ATCC VR-571B / DSM 19440 / HAR-13) protein is Chaperonin GroEL.